Reading from the N-terminus, the 119-residue chain is Ribonuclease P protein component (119 aa).

The protein belongs to the RnpA family. Consists of a catalytic RNA component (M1 or rnpB) and a protein subunit.

It catalyses the reaction Endonucleolytic cleavage of RNA, removing 5'-extranucleotides from tRNA precursor.. Functionally, RNaseP catalyzes the removal of the 5'-leader sequence from pre-tRNA to produce the mature 5'-terminus. It can also cleave other RNA substrates such as 4.5S RNA. The protein component plays an auxiliary but essential role in vivo by binding to the 5'-leader sequence and broadening the substrate specificity of the ribozyme. The chain is Ribonuclease P protein component from Yersinia enterocolitica serotype O:8 / biotype 1B (strain NCTC 13174 / 8081).